A 230-amino-acid chain; its full sequence is Flagellar L-ring protein (230 aa).

A signal peptide spans 1–22; that stretch reads MSPLSNFARTALACAVAALLGG. Cysteine 23 carries the N-palmitoyl cysteine lipid modification. A lipid anchor (S-diacylglycerol cysteine) is attached at cysteine 23.

It belongs to the FlgH family. In terms of assembly, the basal body constitutes a major portion of the flagellar organelle and consists of four rings (L,P,S, and M) mounted on a central rod.

Its subcellular location is the cell outer membrane. It is found in the bacterial flagellum basal body. Its function is as follows. Assembles around the rod to form the L-ring and probably protects the motor/basal body from shearing forces during rotation. This is Flagellar L-ring protein from Stenotrophomonas maltophilia (strain R551-3).